A 188-amino-acid polypeptide reads, in one-letter code: Mitochondrial import inner membrane translocase subunit Tim23B (188 aa).

The next 2 helical transmembrane spans lie at 73–93 (FELAFFTIGGCCMTGAAFGAM) and 125–145 (ALWANTLGSLALLYSAFGVII).

Belongs to the Tim17/Tim22/Tim23 family.

The protein localises to the mitochondrion inner membrane. In terms of biological role, may participate in the translocation of transit peptide-containing proteins across the mitochondrial inner membrane. the PAM complex. In Homo sapiens (Human), this protein is Mitochondrial import inner membrane translocase subunit Tim23B.